Reading from the N-terminus, the 62-residue chain is DNA-directed RNA polymerase subunit Rpo10 (62 aa).

Residues Cys-6, Cys-9, Cys-43, and Cys-44 each coordinate Zn(2+).

It belongs to the archaeal Rpo10/eukaryotic RPB10 RNA polymerase subunit family. Part of the RNA polymerase complex. Requires Zn(2+) as cofactor.

The protein localises to the cytoplasm. The enzyme catalyses RNA(n) + a ribonucleoside 5'-triphosphate = RNA(n+1) + diphosphate. Its function is as follows. DNA-dependent RNA polymerase (RNAP) catalyzes the transcription of DNA into RNA using the four ribonucleoside triphosphates as substrates. The polypeptide is DNA-directed RNA polymerase subunit Rpo10 (Methanococcoides burtonii (strain DSM 6242 / NBRC 107633 / OCM 468 / ACE-M)).